The sequence spans 206 residues: MKFDKHMLRKYFIMGSQNCHRDPREILKEAASAGITAFQYREKGKNSLTGTAKVELAKDLKAICHDFQIPFIINDDVDLAKQLDADGIHIGQDDQPVEVVRKQFPNKIIGLSISTNNELNQSPLDLVDYIGVGPIFDTNTKEDAKTAVGLEWIQSLKKQHPSLPLVAIGGINTTNAQEIIQAGADGVSFISAITETDHILQAVQRL.

4-amino-2-methyl-5-(diphosphooxymethyl)pyrimidine-binding positions include 39–43 (QYREK) and asparagine 74. Positions 75 and 94 each coordinate Mg(2+). Serine 112 is a 4-amino-2-methyl-5-(diphosphooxymethyl)pyrimidine binding site. 2-[(2R,5Z)-2-carboxy-4-methylthiazol-5(2H)-ylidene]ethyl phosphate is bound at residue 138-140 (TNT). Residue lysine 141 participates in 4-amino-2-methyl-5-(diphosphooxymethyl)pyrimidine binding. 2-[(2R,5Z)-2-carboxy-4-methylthiazol-5(2H)-ylidene]ethyl phosphate contacts are provided by residues glycine 170 and 190 to 191 (IS).

This sequence belongs to the thiamine-phosphate synthase family. It depends on Mg(2+) as a cofactor.

It catalyses the reaction 2-[(2R,5Z)-2-carboxy-4-methylthiazol-5(2H)-ylidene]ethyl phosphate + 4-amino-2-methyl-5-(diphosphooxymethyl)pyrimidine + 2 H(+) = thiamine phosphate + CO2 + diphosphate. It carries out the reaction 2-(2-carboxy-4-methylthiazol-5-yl)ethyl phosphate + 4-amino-2-methyl-5-(diphosphooxymethyl)pyrimidine + 2 H(+) = thiamine phosphate + CO2 + diphosphate. The enzyme catalyses 4-methyl-5-(2-phosphooxyethyl)-thiazole + 4-amino-2-methyl-5-(diphosphooxymethyl)pyrimidine + H(+) = thiamine phosphate + diphosphate. It participates in cofactor biosynthesis; thiamine diphosphate biosynthesis; thiamine phosphate from 4-amino-2-methyl-5-diphosphomethylpyrimidine and 4-methyl-5-(2-phosphoethyl)-thiazole: step 1/1. Its function is as follows. Condenses 4-methyl-5-(beta-hydroxyethyl)thiazole monophosphate (THZ-P) and 2-methyl-4-amino-5-hydroxymethyl pyrimidine pyrophosphate (HMP-PP) to form thiamine monophosphate (TMP). The protein is Thiamine-phosphate synthase of Oceanobacillus iheyensis (strain DSM 14371 / CIP 107618 / JCM 11309 / KCTC 3954 / HTE831).